Here is a 409-residue protein sequence, read N- to C-terminus: E3 ubiquitin-protein ligase MARCHF4 (409 aa).

The first 17 residues, 1–17 (MLMPLGGLLWWWCCCCG), serve as a signal peptide directing secretion. The interval 92–133 (GPREAVGRETPPLPPPPPLPPSGDDDWDGPATGPPASLLSSA) is disordered. Over residues 102 to 112 (PPLPPPPPLPP) the composition is skewed to pro residues. Residues 154 to 214 (DSGMRTPLCR…ELCYYKYHVI (61 aa)) form an RING-CH-type zinc finger. Residues Cys-162, Cys-165, Cys-178, Cys-180, His-188, Cys-191, Cys-204, and Cys-207 each contribute to the Zn(2+) site. 2 helical membrane-spanning segments follow: residues 242–262 (LGSL…FSPS) and 271–291 (LFQI…GLII). 2 disordered regions span residues 323-372 (EDQK…GPVS) and 389-409 (PHDQ…VTTV). Residues 328–343 (GGRTNLQTSSSAQANL) show a composition bias toward polar residues.

Its subcellular location is the golgi apparatus membrane. The enzyme catalyses S-ubiquitinyl-[E2 ubiquitin-conjugating enzyme]-L-cysteine + [acceptor protein]-L-lysine = [E2 ubiquitin-conjugating enzyme]-L-cysteine + N(6)-ubiquitinyl-[acceptor protein]-L-lysine.. It functions in the pathway protein modification; protein ubiquitination. Functionally, E3 ubiquitin-protein ligase that may mediate ubiquitination of MHC-I and CD4, and promote their subsequent endocytosis and sorting to lysosomes via multivesicular bodies. E3 ubiquitin ligases accept ubiquitin from an E2 ubiquitin-conjugating enzyme in the form of a thioester and then directly transfer the ubiquitin to targeted substrates. This chain is E3 ubiquitin-protein ligase MARCHF4 (Marchf4), found in Mus musculus (Mouse).